We begin with the raw amino-acid sequence, 241 residues long: Enterotoxin type H (241 aa).

Residues 1-24 (MINKIKILFSFLALLLSFTSYAKA) form the signal peptide. A disulfide bridge connects residues cysteine 106 and cysteine 116. Residues aspartate 191, histidine 230, and aspartate 232 each contribute to the Zn(2+) site.

Belongs to the staphylococcal/streptococcal toxin family. As to quaternary structure, interacts with host MHC class II molecules composed of alpha/HLA-DRA and beta/HLA-DRB1 chains. Interacts with host TCR alpha-chain TRAV27. Zn(2+) serves as cofactor.

Its subcellular location is the secreted. In terms of biological role, staphylococcal enterotoxin that activates the host immune system by binding as unprocessed molecules to major histocompatibility (MHC) complex class II and T-cell receptor (TCR) molecules via their alpha domain, in particular TRAV27. In turn, this ternary complex activates a large number of T-lymphocytes initiating a systemic release of pro-inflammatory cytokines. Also causes the intoxication staphylococcal food poisoning syndrome. The illness characterized by high fever, hypotension, diarrhea, shock, and in some cases death. The chain is Enterotoxin type H (entH) from Staphylococcus aureus.